The primary structure comprises 204 residues: Holliday junction branch migration complex subunit RuvA (204 aa).

The interval 1-63 (MIGKLSGKVD…EEHIHLYGFL (63 aa)) is domain I. The interval 64-142 (TLEEKIFFNL…KISSGSAIIK (79 aa)) is domain II. Positions 143-149 (ESLNIKN) are flexible linker. The segment at 150 to 204 (ITPVASNEVIKALVNLGFSRFEAQNAVQGIITQNPEISIDELIKTALKNRNSNFS) is domain III.

Belongs to the RuvA family. Homotetramer. Forms an RuvA(8)-RuvB(12)-Holliday junction (HJ) complex. HJ DNA is sandwiched between 2 RuvA tetramers; dsDNA enters through RuvA and exits via RuvB. An RuvB hexamer assembles on each DNA strand where it exits the tetramer. Each RuvB hexamer is contacted by two RuvA subunits (via domain III) on 2 adjacent RuvB subunits; this complex drives branch migration. In the full resolvosome a probable DNA-RuvA(4)-RuvB(12)-RuvC(2) complex forms which resolves the HJ.

The protein resides in the cytoplasm. The RuvA-RuvB-RuvC complex processes Holliday junction (HJ) DNA during genetic recombination and DNA repair, while the RuvA-RuvB complex plays an important role in the rescue of blocked DNA replication forks via replication fork reversal (RFR). RuvA specifically binds to HJ cruciform DNA, conferring on it an open structure. The RuvB hexamer acts as an ATP-dependent pump, pulling dsDNA into and through the RuvAB complex. HJ branch migration allows RuvC to scan DNA until it finds its consensus sequence, where it cleaves and resolves the cruciform DNA. In Rickettsia rickettsii (strain Iowa), this protein is Holliday junction branch migration complex subunit RuvA.